A 409-amino-acid chain; its full sequence is 5-aminolevulinate synthase (409 aa).

Substrate-binding residues include Arg21, Ser137, and Lys156. Ser189, His217, and Thr245 together coordinate pyridoxal 5'-phosphate. The active site involves Lys248. Lys248 carries the N6-(pyridoxal phosphate)lysine modification. The pyridoxal 5'-phosphate site is built by Thr277 and Thr278. Thr365 is a binding site for substrate.

Belongs to the class-II pyridoxal-phosphate-dependent aminotransferase family. In terms of assembly, homodimer. Pyridoxal 5'-phosphate serves as cofactor.

The enzyme catalyses succinyl-CoA + glycine + H(+) = 5-aminolevulinate + CO2 + CoA. It functions in the pathway porphyrin-containing compound metabolism; protoporphyrin-IX biosynthesis; 5-aminolevulinate from glycine: step 1/1. The chain is 5-aminolevulinate synthase (hemA) from Paracoccus denitrificans (strain Pd 1222).